Here is a 256-residue protein sequence, read N- to C-terminus: Sec-independent protein translocase protein TatC (256 aa).

A run of 6 helical transmembrane segments spans residues 25–45, 77–97, 117–137, 158–178, 195–215, and 217–237; these read VICV…IYHF, AIVA…AFIA, ILFY…VFSF, FALA…AIIL, PYII…DVFS, and TLLA…ARFY.

It belongs to the TatC family. As to quaternary structure, the Tat system comprises two distinct complexes: a TatABC complex, containing multiple copies of TatA, TatB and TatC subunits, and a separate TatA complex, containing only TatA subunits. Substrates initially bind to the TatABC complex, which probably triggers association of the separate TatA complex to form the active translocon.

Its subcellular location is the cell inner membrane. In terms of biological role, part of the twin-arginine translocation (Tat) system that transports large folded proteins containing a characteristic twin-arginine motif in their signal peptide across membranes. Together with TatB, TatC is part of a receptor directly interacting with Tat signal peptides. This Haemophilus influenzae (strain ATCC 51907 / DSM 11121 / KW20 / Rd) protein is Sec-independent protein translocase protein TatC.